The following is a 285-amino-acid chain: (3S)-malyl-CoA thioesterase (285 aa).

Residues Arg-70 and Glu-122 each coordinate substrate. Glu-122 and Asp-148 together coordinate Mg(2+).

Belongs to the HpcH/HpaI aldolase family. Homodimer or homotrimer. Requires Mg(2+) as cofactor.

The enzyme catalyses (S)-malyl-CoA + H2O = (S)-malate + CoA + H(+). Reversibly inhibited by EDTA. Stimulated by the divalent cations Mg(2+) and Mn(2+). In terms of biological role, catalyzes the hydrolysis of (3S)-malyl-CoA to (3S)-malate and free CoA. Inactive towards beta-methylmalyl-CoA and other CoA esters. In Cereibacter sphaeroides (strain ATCC 17023 / DSM 158 / JCM 6121 / CCUG 31486 / LMG 2827 / NBRC 12203 / NCIMB 8253 / ATH 2.4.1.) (Rhodobacter sphaeroides), this protein is (3S)-malyl-CoA thioesterase.